The sequence spans 522 residues: Sorting nexin-1 (522 aa).

Positions 1-142 (MASGGGGCSA…ELEEEEQEDQ (142 aa)) are disordered. Ser-32 and Ser-39 each carry phosphoserine. Residues 35-45 (EAGDSDTEGED) are compositionally biased toward acidic residues. Phosphothreonine occurs at positions 41 and 48. The segment covering 55 to 65 (KPQSPKKTTSL) has biased composition (polar residues). A phosphoserine mark is found at Ser-58 and Ser-72. Over residues 71-80 (GSKENGIHEE) the composition is skewed to basic and acidic residues. A compositionally biased stretch (polar residues) spans 98 to 107 (LDSTQNNQKT). Residues 132–142 (EELEEEEQEDQ) are compositionally biased toward acidic residues. The PX domain maps to 143-272 (FDLTVGITDP…EFLEKEELPR (130 aa)). Residues Arg-186, Ser-188, and Lys-214 each coordinate a 1,2-diacyl-sn-glycero-3-phospho-(1D-myo-inositol-3-phosphate). Ser-188 carries the phosphoserine modification. An N6-acetyllysine modification is found at Lys-237. Position 238 (Arg-238) interacts with a 1,2-diacyl-sn-glycero-3-phospho-(1D-myo-inositol-3-phosphate). Ser-280 is modified (phosphoserine). Residues 281–298 (GAGLLKMFNKATDAVSKM) form a membrane-binding amphipathic helix region. The region spanning 302–522 (MNESDIWFEE…AFLPEARAIS (221 aa)) is the BAR domain.

It belongs to the sorting nexin family. As to quaternary structure, predominantly forms heterodimers with BAR domain-containing sorting nexins SNX5, SNX6 and SNX32; can self-associate to form homodimers. The heterodimers are proposed to self-assemble into helical arrays on the membrane to stabilize and expand local membrane curvature underlying endosomal tubule formation. Thought to be a component of the originally described retromer complex (also called SNX-BAR retromer) which is a pentamer containing the heterotrimeric retromer cargo-selective complex (CSC), also described as vacuolar protein sorting subcomplex (VPS) and a heterodimeric membrane-deforming subcomplex formed between SNX1 or SNX2 and SNX5 or SNX6 (also called SNX-BAR subcomplex); the respective CSC and SNX-BAR subcomplexes associate with low affinity. Interacts with SNX5, SNX6, SNX32, VPS26A, VPS29, VPS35, DRD5, DENND5A, KALRN, RHOG (GDP-bound form). The interaction with SNX2 is reported controversially. Interacts with DNAJC13; prevented by presence of HGS. Interacts with HGS.

Its subcellular location is the endosome membrane. The protein localises to the golgi apparatus. The protein resides in the trans-Golgi network membrane. It localises to the early endosome membrane. It is found in the cell projection. Its subcellular location is the lamellipodium. Involved in several stages of intracellular trafficking. Interacts with membranes containing phosphatidylinositol 3-phosphate (PtdIns(3P)) or phosphatidylinositol 3,5-bisphosphate (PtdIns(3,5)P2). Acts in part as component of the retromer membrane-deforming SNX-BAR subcomplex. The SNX-BAR retromer mediates retrograde transport of cargo proteins from endosomes to the trans-Golgi network (TGN) and is involved in endosome-to-plasma membrane transport for cargo protein recycling. The SNX-BAR subcomplex functions to deform the donor membrane into a tubular profile called endosome-to-TGN transport carrier (ETC). Can sense membrane curvature and has in vitro vesicle-to-membrane remodeling activity. Involved in retrograde endosome-to-TGN transport of lysosomal enzyme receptors (IGF2R, M6PR and SORT1). Plays a role in targeting ligand-activated EGFR to the lysosomes for degradation after endocytosis from the cell surface and release from the Golgi. Involvement in retromer-independent endocytic trafficking of P2RY1 and lysosomal degradation of protease-activated receptor-1/F2R. Promotes KALRN- and RHOG-dependent but retromer-independent membrane remodeling such as lamellipodium formation; the function is dependent on GEF activity of KALRN. Required for endocytosis of DRD5 upon agonist stimulation but not for basal receptor trafficking. The protein is Sorting nexin-1 (Snx1) of Rattus norvegicus (Rat).